Consider the following 156-residue polypeptide: uncharacterized protein (156 aa).

In terms of domain architecture, N-acetyltransferase spans 10-156; sequence VAARTFPLAC…NDYVMVRELV (147 aa).

It belongs to the acetyltransferase family.

This is an uncharacterized protein from Mycobacterium bovis (strain ATCC BAA-935 / AF2122/97).